We begin with the raw amino-acid sequence, 71 residues long: UPF0435 protein BPUM_0734 (71 aa).

Belongs to the UPF0435 family.

The protein is UPF0435 protein BPUM_0734 of Bacillus pumilus (strain SAFR-032).